Reading from the N-terminus, the 168-residue chain is Large ribosomal subunit protein uL10 (168 aa).

The protein belongs to the universal ribosomal protein uL10 family. As to quaternary structure, part of the ribosomal stalk of the 50S ribosomal subunit. The N-terminus interacts with L11 and the large rRNA to form the base of the stalk. The C-terminus forms an elongated spine to which L12 dimers bind in a sequential fashion forming a multimeric L10(L12)X complex.

Functionally, forms part of the ribosomal stalk, playing a central role in the interaction of the ribosome with GTP-bound translation factors. The polypeptide is Large ribosomal subunit protein uL10 (Photorhabdus laumondii subsp. laumondii (strain DSM 15139 / CIP 105565 / TT01) (Photorhabdus luminescens subsp. laumondii)).